A 271-amino-acid polypeptide reads, in one-letter code: Glutamate racemase (271 aa).

Residues 10-11 (DS) and 42-43 (YG) each bind substrate. Cysteine 74 serves as the catalytic Proton donor/acceptor. 75–76 (NT) lines the substrate pocket. Catalysis depends on cysteine 189, which acts as the Proton donor/acceptor. 190–191 (TH) lines the substrate pocket.

This sequence belongs to the aspartate/glutamate racemases family.

It carries out the reaction L-glutamate = D-glutamate. The protein operates within cell wall biogenesis; peptidoglycan biosynthesis. Provides the (R)-glutamate required for cell wall biosynthesis. The chain is Glutamate racemase from Bartonella bacilliformis (strain ATCC 35685 / KC583 / Herrer 020/F12,63).